The following is a 284-amino-acid chain: Bifunctional protein FolD 1 (284 aa).

NADP(+) is bound by residues 166–168 (GAS), S191, and I232.

It belongs to the tetrahydrofolate dehydrogenase/cyclohydrolase family. In terms of assembly, homodimer.

The enzyme catalyses (6R)-5,10-methylene-5,6,7,8-tetrahydrofolate + NADP(+) = (6R)-5,10-methenyltetrahydrofolate + NADPH. The catalysed reaction is (6R)-5,10-methenyltetrahydrofolate + H2O = (6R)-10-formyltetrahydrofolate + H(+). It functions in the pathway one-carbon metabolism; tetrahydrofolate interconversion. Functionally, catalyzes the oxidation of 5,10-methylenetetrahydrofolate to 5,10-methenyltetrahydrofolate and then the hydrolysis of 5,10-methenyltetrahydrofolate to 10-formyltetrahydrofolate. The sequence is that of Bifunctional protein FolD 1 from Hydrogenovibrio crunogenus (strain DSM 25203 / XCL-2) (Thiomicrospira crunogena).